We begin with the raw amino-acid sequence, 249 residues long: Eukaryotic translation initiation factor 3 subunit K (249 aa).

The PCI domain maps to 46–222 (FDCYANLALL…VKVPTNKENE (177 aa)).

The protein belongs to the eIF-3 subunit K family. Component of the eukaryotic translation initiation factor 3 (eIF-3) complex.

It is found in the cytoplasm. In terms of biological role, component of the eukaryotic translation initiation factor 3 (eIF-3) complex, which is involved in protein synthesis of a specialized repertoire of mRNAs and, together with other initiation factors, stimulates binding of mRNA and methionyl-tRNAi to the 40S ribosome. The eIF-3 complex specifically targets and initiates translation of a subset of mRNAs involved in cell proliferation. The polypeptide is Eukaryotic translation initiation factor 3 subunit K (Aspergillus fumigatus (strain CBS 144.89 / FGSC A1163 / CEA10) (Neosartorya fumigata)).